Here is a 459-residue protein sequence, read N- to C-terminus: Putrescine aminotransferase (459 aa).

Pyridoxal 5'-phosphate is bound by residues G150 to T151 and Q274. K300 carries the N6-(pyridoxal phosphate)lysine modification. A pyridoxal 5'-phosphate-binding site is contributed by T332.

The protein belongs to the class-III pyridoxal-phosphate-dependent aminotransferase family. Putrescine aminotransferase subfamily. Pyridoxal 5'-phosphate is required as a cofactor.

It carries out the reaction an alkane-alpha,omega-diamine + 2-oxoglutarate = an omega-aminoaldehyde + L-glutamate. The catalysed reaction is putrescine + 2-oxoglutarate = 1-pyrroline + L-glutamate + H2O. The enzyme catalyses cadaverine + 2-oxoglutarate = 5-aminopentanal + L-glutamate. It functions in the pathway amine and polyamine degradation; putrescine degradation; 4-aminobutanal from putrescine (transaminase route): step 1/1. In terms of biological role, catalyzes the aminotransferase reaction from putrescine to 2-oxoglutarate, leading to glutamate and 4-aminobutanal, which spontaneously cyclizes to form 1-pyrroline. This is the first step in one of two pathways for putrescine degradation, where putrescine is converted into 4-aminobutanoate (gamma-aminobutyrate or GABA) via 4-aminobutanal. Also functions as a cadaverine transaminase in a a L-lysine degradation pathway to succinate that proceeds via cadaverine, glutarate and L-2-hydroxyglutarate. The protein is Putrescine aminotransferase of Shigella flexneri serotype 5b (strain 8401).